A 345-amino-acid chain; its full sequence is Phosphoribosylformylglycinamidine cyclo-ligase (345 aa).

This sequence belongs to the AIR synthase family. As to quaternary structure, homodimer.

The protein resides in the cytoplasm. The enzyme catalyses 2-formamido-N(1)-(5-O-phospho-beta-D-ribosyl)acetamidine + ATP = 5-amino-1-(5-phospho-beta-D-ribosyl)imidazole + ADP + phosphate + H(+). The protein operates within purine metabolism; IMP biosynthesis via de novo pathway; 5-amino-1-(5-phospho-D-ribosyl)imidazole from N(2)-formyl-N(1)-(5-phospho-D-ribosyl)glycinamide: step 2/2. This Escherichia coli O157:H7 protein is Phosphoribosylformylglycinamidine cyclo-ligase.